The chain runs to 474 residues: Rhodanese-like domain-containing protein 7 (474 aa).

2 disordered regions span residues 20–68 (SSPP…SSLK) and 179–198 (VSPE…PLAA). Over residues 53 to 68 (QSQPHKLSSSPSSSLK) the composition is skewed to low complexity. Residues 245 to 368 (SDPETVVIDV…YLEEVPKTES (124 aa)) form the Rhodanese domain. Cys-328 (cysteine persulfide intermediate) is an active-site residue. Residues 432–474 (RARARQTQFEEWGVIGGPDKGRRPATKPDSPRKKINAKLGSSI) form a disordered region.

In Arabidopsis thaliana (Mouse-ear cress), this protein is Rhodanese-like domain-containing protein 7 (STR7).